Consider the following 516-residue polypeptide: uncharacterized protein (516 aa).

5 consecutive transmembrane segments (helical) span residues 10 to 27 (IRYP…GYWI), 32 to 54 (IGAF…GDFA), 64 to 83 (SFLF…PQFV), 95 to 117 (LLAV…ILGL), and 165 to 187 (AVCY…PALL). 2 consecutive RCK C-terminal domains span residues 208-291 (KPGL…SRAE) and 296-376 (RELL…NIGV). A run of 4 helical transmembrane segments spans residues 386–408 (FVVL…FPVG), 412–430 (IALS…VGHL), 443–465 (GAIS…IHAG), and 480–502 (LLGG…HFVL).

Belongs to the AAE transporter (TC 2.A.81) family.

The protein resides in the cell membrane. This is an uncharacterized protein from Bradyrhizobium diazoefficiens (strain JCM 10833 / BCRC 13528 / IAM 13628 / NBRC 14792 / USDA 110).